Consider the following 513-residue polypeptide: Zinc finger protein RFP (513 aa).

The RING-type zinc finger occupies 16-57 (CPVCLQYFAEPMMLDCGHNICCACLARCWGTAETNVSCPQCR). Cys-96, His-99, Cys-118, and His-124 together coordinate Zn(2+). The B box-type zinc finger occupies 96-127 (CEKHREPLKLYCEEDQMPICVVCDRSREHRGH). Coiled-coil stretches lie at residues 132-172 (LEEA…AELL) and 282-311 (QKCL…LREA). One can recognise a B30.2/SPRY domain in the interval 298–492 (MQSDMEKIQE…SAAPLIICPM (195 aa)).

The protein belongs to the TRIM/RBCC family. Homomultimerizes. Part of a complex consisting of TRIM27, USP7 and MAGEL2; directly interacts with USP7. Interacts with PML, EIF3S6, EPC1, CHD4 and EID1. Interacts with MAGED4, MAGEF1 and MAGEL2. Interacts with PTPN11. Interacts with autophagy receptor p62/SQSTM1. As to quaternary structure, (Microbial infection) Interacts with M.tuberculosis PtpA, whick blocks TRIM27-promoted JNK/p38 MAPK pathway activation and cell apoptosis. In terms of assembly, (Microbial infection) Interacts with herpes simplex virus protein ICP0. As to expression, expressed in testis namely within the seminiferous tubules.

Its subcellular location is the nucleus. The protein resides in the cytoplasm. It is found in the PML body. The protein localises to the early endosome. It localises to the mitochondrion. It carries out the reaction S-ubiquitinyl-[E2 ubiquitin-conjugating enzyme]-L-cysteine + [acceptor protein]-L-lysine = [E2 ubiquitin-conjugating enzyme]-L-cysteine + N(6)-ubiquitinyl-[acceptor protein]-L-lysine.. The protein operates within protein modification; protein ubiquitination. Its function is as follows. E3 ubiquitin-protein ligase that mediates ubiquitination of various substrates and thereby plays a role in diffent processes including proliferation, innate immunity, apoptosis, immune response or autophagy. Ubiquitinates PIK3C2B and inhibits its activity by mediating the formation of 'Lys-48'-linked polyubiquitin chains; the function inhibits CD4 T-cell activation. Acts as a regulator of retrograde transport: together with MAGEL2, mediates the formation of 'Lys-63'-linked polyubiquitin chains at 'Lys-220' of WASHC1, leading to promote endosomal F-actin assembly. Has a transcriptional repressor activity by cooperating with EPC1. Induces apoptosis by activating Jun N-terminal kinase and p38 kinase and also increases caspase-3-like activity independently of mitochondrial events. May function in male germ cell development. Has DNA-binding activity and preferentially bound to double-stranded DNA. Forms a complex with and ubiquitinates the ubiquitin-specific protease USP7, which in turn deubiquitinates RIPK1 resulting in the positive regulation of TNF-alpha-induced apoptosis. In addition, acts with USP7 or PTPN11 as an inhibitor of the antiviral signaling pathway by promoting kinase TBK1 ubiquitination and degradation. Acts as a negative regulator of NOD2 signaling by mediating ubiquitination of NOD2, promoting its degradation by the proteasome. Alternatively, facilitates mitophagy via stabilization of active TBK1. Negatively regulates autophagy flux under basal conditions by directly polyubiquitinating ULK1. During starvation-induced autophagy, catalyzes non-degradative ubiquitination of the kinase STK38L promoting its activation and phosphorylation of ULK1 leading to its ubiquitination and degradation to restrain the amplitude and duration of autophagy. In terms of biological role, (Microbial infection) Positively regulates hepatitis C virus replication by suppressing type I IFN response during infection. The chain is Zinc finger protein RFP from Homo sapiens (Human).